Reading from the N-terminus, the 202-residue chain is Prephenate decarboxylase (202 aa).

Belongs to the prephenate decarboxylase family.

It carries out the reaction prephenate + H(+) = 3-[(4R)-4-hydroxycyclohexa-1,5-dien-1-yl]-2-oxopropanoate + CO2. Functionally, in vivo, involved in the biosynthesis of 2-carboxy-6-hydroxyoctahydroindole (Choi) present in the nonribosomal glycopeptides aeruginoside 126A and B. AerD is an unusual prephenate decarboxylase that avoids the typical aromatization of the cyclohexadienol ring of prephenate. AerD catalyzes the protonation at C8 followed by decarboxylation to produce the dihydro-4-hydroxyphenylpyruvate regioisomer A258 (H2HPP A258)(3-(4-hydroxycyclohexa- 1,5-dienyl)-2-oxopropanoic acid), which is able to undergo a nonenzymatic isomerization to produce dihydro-4-hydroxyphenylpyruvate regioisomer A295 (H2HPP A295)(3-(4-hydroxycyclohex-2-enylidene)-2-oxopropanoic acid). In Planktothrix agardhii (strain NIVA-CYA 126/8), this protein is Prephenate decarboxylase.